Here is a 476-residue protein sequence, read N- to C-terminus: Bifunctional protein HldE (476 aa).

A ribokinase region spans residues 1–318 (MLSKKPNILV…EYESSLHKSN (318 aa)). Position 195 to 198 (195 to 198 (NKKE)) interacts with ATP. Aspartate 263 is a catalytic residue. Positions 345 to 476 (FTNGCFDILH…RIQENEKCNN (132 aa)) are cytidylyltransferase.

In the N-terminal section; belongs to the carbohydrate kinase PfkB family. It in the C-terminal section; belongs to the cytidylyltransferase family. In terms of assembly, homodimer.

The enzyme catalyses D-glycero-beta-D-manno-heptose 7-phosphate + ATP = D-glycero-beta-D-manno-heptose 1,7-bisphosphate + ADP + H(+). The catalysed reaction is D-glycero-beta-D-manno-heptose 1-phosphate + ATP + H(+) = ADP-D-glycero-beta-D-manno-heptose + diphosphate. Its pathway is nucleotide-sugar biosynthesis; ADP-L-glycero-beta-D-manno-heptose biosynthesis; ADP-L-glycero-beta-D-manno-heptose from D-glycero-beta-D-manno-heptose 7-phosphate: step 1/4. It functions in the pathway nucleotide-sugar biosynthesis; ADP-L-glycero-beta-D-manno-heptose biosynthesis; ADP-L-glycero-beta-D-manno-heptose from D-glycero-beta-D-manno-heptose 7-phosphate: step 3/4. Catalyzes the phosphorylation of D-glycero-D-manno-heptose 7-phosphate at the C-1 position to selectively form D-glycero-beta-D-manno-heptose-1,7-bisphosphate. In terms of biological role, catalyzes the ADP transfer from ATP to D-glycero-beta-D-manno-heptose 1-phosphate, yielding ADP-D-glycero-beta-D-manno-heptose. In Aliarcobacter butzleri (strain RM4018) (Arcobacter butzleri), this protein is Bifunctional protein HldE.